A 572-amino-acid polypeptide reads, in one-letter code: Phosphoenolpyruvate-protein phosphotransferase (572 aa).

H190 (tele-phosphohistidine intermediate) is an active-site residue. The phosphoenolpyruvate site is built by R297 and R333. Mg(2+) contacts are provided by E427 and D451. Phosphoenolpyruvate-binding positions include 450-451 (ND) and R461. C498 serves as the catalytic Proton donor.

It belongs to the PEP-utilizing enzyme family. In terms of assembly, homodimer. Requires Mg(2+) as cofactor.

The protein localises to the cytoplasm. It catalyses the reaction L-histidyl-[protein] + phosphoenolpyruvate = N(pros)-phospho-L-histidyl-[protein] + pyruvate. Its function is as follows. General (non sugar-specific) component of the phosphoenolpyruvate-dependent sugar phosphotransferase system (sugar PTS). This major carbohydrate active-transport system catalyzes the phosphorylation of incoming sugar substrates concomitantly with their translocation across the cell membrane. Enzyme I transfers the phosphoryl group from phosphoenolpyruvate (PEP) to the phosphoryl carrier protein (HPr). This chain is Phosphoenolpyruvate-protein phosphotransferase (ptsI), found in Mycoplasma genitalium (strain ATCC 33530 / DSM 19775 / NCTC 10195 / G37) (Mycoplasmoides genitalium).